Consider the following 321-residue polypeptide: Probable DNA polymerase III subunit delta (321 aa).

The protein belongs to the DNA polymerase HolA subunit family. In terms of assembly, component of the DNA clamp loading complex consisting of tau(3):delta(1):delta'(1). The DNA polymerase III holoenzyme complex contains at least 10 different subunits organized into 3 functionally essential subassemblies: the Pol III core, the beta sliding clamp processivity factor and the clamp-loading complex. The Pol III core (subunits alpha, epsilon and theta) contains the polymerase and the 3'-5' exonuclease proofreading activities. The polymerase is tethered to the template via the dimeric beta sliding clamp processivity factor. The DNA clamp-loading complex assembles the beta sliding clamp onto the primed template and plays a central role in the organization and communication at the replication fork.

The enzyme catalyses DNA(n) + a 2'-deoxyribonucleoside 5'-triphosphate = DNA(n+1) + diphosphate. Its function is as follows. Part of the beta sliding clamp loading complex, which hydrolyzes ATP to load the beta clamp onto primed DNA to form the DNA replication pre-initiation complex. DNA polymerase III is a complex, multichain enzyme responsible for most of the replicative synthesis in bacteria. This DNA polymerase also exhibits 3'-5' exonuclease activity. The delta subunit is the wrench that will open the beta subunit dimer. The DNA clamp loading complex (tau(3),delta,delta') is thought to load beta dimers onto DNA by binding ATP which alters the complex's conformation so it can bind beta sliding clamp dimers and open them at one interface. Primed DNA is recognized, ATP is hydrolyzed releasing the clamp loading complex and closing the beta sliding clamp ring around the primed DNA. The chain is Probable DNA polymerase III subunit delta from Rickettsia prowazekii (strain Madrid E).